Consider the following 346-residue polypeptide: NADH-quinone oxidoreductase subunit H 2 (346 aa).

Transmembrane regions (helical) follow at residues 14–34 (IAMV…VAYA), 83–103 (FAFL…FAVI), 136–156 (VGVL…VLAG), 172–192 (SAQM…VFML), 208–228 (GAWY…CSIA), 260–280 (FFMA…TLFL), 289–309 (LPGW…CMWI), and 324–344 (LGWK…GIIV).

It belongs to the complex I subunit 1 family. As to quaternary structure, NDH-1 is composed of 14 different subunits. Subunits NuoA, H, J, K, L, M, N constitute the membrane sector of the complex.

Its subcellular location is the cell inner membrane. The catalysed reaction is a quinone + NADH + 5 H(+)(in) = a quinol + NAD(+) + 4 H(+)(out). Functionally, NDH-1 shuttles electrons from NADH, via FMN and iron-sulfur (Fe-S) centers, to quinones in the respiratory chain. The immediate electron acceptor for the enzyme in this species is believed to be ubiquinone. Couples the redox reaction to proton translocation (for every two electrons transferred, four hydrogen ions are translocated across the cytoplasmic membrane), and thus conserves the redox energy in a proton gradient. This subunit may bind ubiquinone. The protein is NADH-quinone oxidoreductase subunit H 2 of Geobacter metallireducens (strain ATCC 53774 / DSM 7210 / GS-15).